Consider the following 178-residue polypeptide: tRNA (cytidine(56)-2'-O)-methyltransferase (178 aa).

S-adenosyl-L-methionine-binding positions include L84, 112-116, and 130-137; these read GAEKV and VGNQPHSE.

The protein belongs to the aTrm56 family. As to quaternary structure, homodimer.

It localises to the cytoplasm. The catalysed reaction is cytidine(56) in tRNA + S-adenosyl-L-methionine = 2'-O-methylcytidine(56) in tRNA + S-adenosyl-L-homocysteine + H(+). Its function is as follows. Specifically catalyzes the AdoMet-dependent 2'-O-ribose methylation of cytidine at position 56 in tRNAs. This chain is tRNA (cytidine(56)-2'-O)-methyltransferase, found in Methanocella arvoryzae (strain DSM 22066 / NBRC 105507 / MRE50).